The sequence spans 174 residues: UPF0340 protein SAR2202 (174 aa).

It belongs to the UPF0340 family.

This chain is UPF0340 protein SAR2202, found in Staphylococcus aureus (strain MRSA252).